A 371-amino-acid chain; its full sequence is Putative glutamate--cysteine ligase 2 (371 aa).

This sequence belongs to the glutamate--cysteine ligase type 2 family. YbdK subfamily.

It carries out the reaction L-cysteine + L-glutamate + ATP = gamma-L-glutamyl-L-cysteine + ADP + phosphate + H(+). Functionally, ATP-dependent carboxylate-amine ligase which exhibits weak glutamate--cysteine ligase activity. In Burkholderia mallei (strain NCTC 10247), this protein is Putative glutamate--cysteine ligase 2.